Reading from the N-terminus, the 41-residue chain is Putative toxic protein TimP (41 aa).

At 1–17 the chain is embedded in the membrane; the sequence is MKIRCFCIVLIVSGALL.

This sequence belongs to the TimP toxin family.

The protein resides in the cell inner membrane. In terms of biological role, putative toxic component of a potential type I toxin-antitoxin (TA) system. Neutralized by sRNA antitoxin TimR which binds to the 5' UTR of timP mRNA and inhibits translation. The antitoxin gene is encoded immediately upstream and transcribed divergently from the toxin gene; antitoxin RNA is less stable than timP mRNA. This is Putative toxic protein TimP from Escherichia coli (strain K12).